Reading from the N-terminus, the 727-residue chain is Polyribonucleotide nucleotidyltransferase (727 aa).

Residues D488 and D494 each coordinate Mg(2+). The KH domain occupies 555–614 (PKLYTMKINPEKIRDVIGKGGATIRALTDETGCQINIEEDGTITIAATEAAKADEAKRRI). The S1 motif domain occupies 624–692 (GKIYEGPVTK…DKGRVKLSMK (69 aa)). The segment at 691–727 (MKALADRPAGDSGRPAPAERGERRERRDGGASEQQQQ) is disordered. A compositionally biased stretch (basic and acidic residues) spans 707–720 (PAERGERRERRDGG).

The protein belongs to the polyribonucleotide nucleotidyltransferase family. It depends on Mg(2+) as a cofactor.

It is found in the cytoplasm. The enzyme catalyses RNA(n+1) + phosphate = RNA(n) + a ribonucleoside 5'-diphosphate. Functionally, involved in mRNA degradation. Catalyzes the phosphorolysis of single-stranded polyribonucleotides processively in the 3'- to 5'-direction. The protein is Polyribonucleotide nucleotidyltransferase of Acidovorax sp. (strain JS42).